The following is a 578-amino-acid chain: Proteasome-associated ATPase (578 aa).

Residues 8 to 84 (TAAELRNQVR…LKEEVDRLAQ (77 aa)) adopt a coiled-coil conformation. 267 to 272 (GCGKTL) serves as a coordination point for ATP. Residues 577–578 (YL) are docks into pockets in the proteasome alpha-ring.

Belongs to the AAA ATPase family. In terms of assembly, homohexamer. Assembles into a hexameric ring structure that caps the 20S proteasome core. Strongly interacts with the prokaryotic ubiquitin-like protein Pup through a hydrophobic interface; the interacting region of ARC lies in its N-terminal coiled-coil domain. There is one Pup binding site per ARC hexamer ring. Upon ATP-binding, the C-terminus of ARC interacts with the alpha-rings of the proteasome core, possibly by binding to the intersubunit pockets.

It functions in the pathway protein degradation; proteasomal Pup-dependent pathway. In terms of biological role, ATPase which is responsible for recognizing, binding, unfolding and translocation of pupylated proteins into the bacterial 20S proteasome core particle. May be essential for opening the gate of the 20S proteasome via an interaction with its C-terminus, thereby allowing substrate entry and access to the site of proteolysis. Thus, the C-termini of the proteasomal ATPase may function like a 'key in a lock' to induce gate opening and therefore regulate proteolysis. This chain is Proteasome-associated ATPase, found in Kribbella flavida (strain DSM 17836 / JCM 10339 / NBRC 14399).